Here is a 663-residue protein sequence, read N- to C-terminus: ATP-dependent zinc metalloprotease FtsH (663 aa).

Residues 1–12 (MNKKETNTSWWR) are Stromal-facing. A helical transmembrane segment spans residues 13–33 (IILISLGISIICILAAFLAMK). Residues 34 to 135 (DGFFVLENNT…HPPKLDIFKT (102 aa)) are Lumenal-facing. Residues 136 to 156 (ISDTLGSLIVPGLVVAVFYLF) form a helical membrane-spanning segment. Residues 157–663 (LERANNNNNN…KIYESKFPKK (507 aa)) are Stromal-facing. Residues 165-184 (NNNSNGSPFGPGGGPNQNMR) form a disordered region. 244 to 251 (GPPGTGKT) serves as a coordination point for ATP. A Zn(2+)-binding site is contributed by His-465. Glu-466 is a catalytic residue. His-469 and Asp-543 together coordinate Zn(2+).

It in the central section; belongs to the AAA ATPase family. The protein in the C-terminal section; belongs to the peptidase M41 family. As to quaternary structure, homohexamer. The cofactor is Zn(2+).

It is found in the plastid. The protein resides in the chloroplast thylakoid membrane. Its function is as follows. Acts as a processive, ATP-dependent zinc metallopeptidase. This is ATP-dependent zinc metalloprotease FtsH from Heterosigma akashiwo (strain NIES-293 / 8280G21-1).